Here is a 300-residue protein sequence, read N- to C-terminus: GTPase Era (300 aa).

The Era-type G domain maps to 8-176 (RCGYVAIVGR…ESLIASHLPE (169 aa)). The segment at 16 to 23 (GRPNVGKS) is G1. 16–23 (GRPNVGKS) is a binding site for GTP. The segment at 42 to 46 (QTTRH) is G2. The G3 stretch occupies residues 63-66 (DTPG). GTP contacts are provided by residues 63–67 (DTPGM) and 125–128 (NKTD). The interval 125–128 (NKTD) is G4. The segment at 155-157 (ISA) is G5. The KH type-2 domain maps to 199-283 (VREKIMRQLG…MLNLWVKVKG (85 aa)).

It belongs to the TRAFAC class TrmE-Era-EngA-EngB-Septin-like GTPase superfamily. Era GTPase family. In terms of assembly, monomer.

The protein localises to the cytoplasm. It localises to the cell inner membrane. Its function is as follows. An essential GTPase that binds both GDP and GTP, with rapid nucleotide exchange. Plays a role in 16S rRNA processing and 30S ribosomal subunit biogenesis and possibly also in cell cycle regulation and energy metabolism. The polypeptide is GTPase Era (Pseudomonas savastanoi pv. phaseolicola (strain 1448A / Race 6) (Pseudomonas syringae pv. phaseolicola (strain 1448A / Race 6))).